The sequence spans 876 residues: Serrate RNA effector molecule homolog (876 aa).

The disordered stretch occupies residues 1–90 (MGDSDDEYDR…RRDWDEHSSD (90 aa)). Residue Gly2 is modified to N-acetylglycine. Ser4 is subject to Phosphoserine. The residue at position 8 (Tyr8) is a Phosphotyrosine. Positions 8 to 73 (YDRRRRDKFR…ERFSPPRHEL (66 aa)) are enriched in basic and acidic residues. Ser67, Ser74, and Ser136 each carry phosphoserine. Lys150 is covalently cross-linked (Glycyl lysine isopeptide (Lys-Gly) (interchain with G-Cter in SUMO2)). The disordered stretch occupies residues 271 to 412 (EEEEEQAGKP…KPKDAAGLEC (142 aa)). Residues 297–347 (DGERKTNDKDEKKEDGKQAENDSSNDDKTKKSEGDGDKEEKKEDSEKEAKK) show a composition bias toward basic and acidic residues. Positions 370–387 (SESESESGQAEEEKEEAE) are enriched in acidic residues. The segment covering 388 to 412 (EALKEKEKPKEEEWEKPKDAAGLEC) has biased composition (basic and acidic residues). Residues Ser493 and Ser540 each carry the phosphoserine modification. At Thr544 the chain carries Phosphothreonine. Residue Ser570 is modified to Phosphoserine. The interval 575–598 (ELLGSSGGAPPEEPPKEGNPAEIN) is disordered. Position 671 is a phosphothreonine (Thr671). Ser679 is subject to Phosphoserine. 3 positions are modified to omega-N-methylarginine: Arg833, Arg840, and Arg850. Residues 835-854 (NYDAFRGQGGYPGKPRNRMV) form a disordered region.

This sequence belongs to the ARS2 family. In terms of assembly, interacts with NCBP1 and DROSHA. Interacts with CASP8AP2 and ERBB4. Interacts with LUZP4. Interacts with NCBP2/CBP20 and NCBP3. Interacts with MTREX. Ubiquitously expressed.

The protein localises to the nucleus. Its subcellular location is the nucleoplasm. The protein resides in the cytoplasm. Acts as a mediator between the cap-binding complex (CBC) and the primary microRNAs (miRNAs) processing machinery during cell proliferation. Contributes to the stability and delivery of capped primary miRNA transcripts to the primary miRNA processing complex containing DGCR8 and DROSHA, thereby playing a role in RNA-mediated gene silencing (RNAi) by miRNAs. Binds capped RNAs (m7GpppG-capped RNA); however interaction is probably mediated via its interaction with NCBP1/CBP80 component of the CBC complex. Involved in cell cycle progression at S phase. Does not directly confer arsenite resistance but rather modulates arsenic sensitivity. Independently of its activity on miRNAs, necessary and sufficient to promote neural stem cell self-renewal. Does so by directly binding SOX2 promoter and positively regulating its transcription. This Homo sapiens (Human) protein is Serrate RNA effector molecule homolog (SRRT).